A 509-amino-acid chain; its full sequence is Lysophospholipid acyltransferase (509 aa).

At 1 to 14 (MAYLIDIPFEYFSS) the chain is on the lumenal side. A helical transmembrane segment spans residues 15-35 (FLGVHPDQLKLLFCFLSAYPF). Residues 36–55 (AGILKRLPSAPWIRNLFSIS) are Cytoplasmic-facing. The chain crosses the membrane as a helical span at residues 56–76 (IGLFYLIGVHHLYDGVLVLLF). The Lumenal segment spans residues 77-94 (DALFTYFVAAFYRSSRMP). A helical membrane pass occupies residues 95–115 (WIIFIVILGHTFSSHVIRYIY). Residues 116–223 (PSENTDITAS…LEPALGRCWR (108 aa)) lie on the Cytoplasmic side of the membrane. The chain crosses the membrane as a helical span at residues 224 to 244 (GLLWLILFITGSSIYPLKFLL). Over 245-246 (TP) the chain is Lumenal. The chain crosses the membrane as a helical span at residues 247–267 (KFASSPILLKYGYVCITAFVA). The Cytoplasmic segment spans residues 268 to 410 (RMKYYGAWEL…TPGPFKRVYD (143 aa)). The active site involves H363. The helical transmembrane segment at 411 to 431 (VIGMVATNLSLSYLIISFLLL) threads the bilayer. Topologically, residues 432–441 (NLKESIHVWK) are lumenal. A helical transmembrane segment spans residues 442–462 (ELYFIVHIYILIALAVFNSPI). The Cytoplasmic portion of the chain corresponds to 463–509 (RSKLDNKIRSRVNSYKLKSYEQSMKSTSDTDMLNMSVPKREDFENDE). The tract at residues 488–509 (STSDTDMLNMSVPKREDFENDE) is disordered. S490 carries the phosphoserine modification. The span at 500–509 (PKREDFENDE) shows a compositional bias: basic and acidic residues.

This sequence belongs to the membrane-bound acyltransferase family.

The protein resides in the endoplasmic reticulum membrane. It is found in the microsome membrane. The catalysed reaction is a 1-acyl-sn-glycero-3-phosphate + an acyl-CoA = a 1,2-diacyl-sn-glycero-3-phosphate + CoA. The enzyme catalyses a 1-acyl-sn-glycero-3-phosphocholine + an acyl-CoA = a 1,2-diacyl-sn-glycero-3-phosphocholine + CoA. It carries out the reaction a 1-acyl-sn-glycero-3-phosphoethanolamine + an acyl-CoA = a 1,2-diacyl-sn-glycero-3-phosphoethanolamine + CoA. Its function is as follows. Membrane-bound O-acyltransferase that mediates the incorporation of unsaturated acyl chains into the sn-2 position of phospholipids. The sequence is that of Lysophospholipid acyltransferase (ale1) from Schizosaccharomyces pombe (strain 972 / ATCC 24843) (Fission yeast).